Reading from the N-terminus, the 422-residue chain is Glutamate-1-semialdehyde 2,1-aminomutase (422 aa).

K264 is subject to N6-(pyridoxal phosphate)lysine.

It belongs to the class-III pyridoxal-phosphate-dependent aminotransferase family. HemL subfamily. In terms of assembly, homodimer. Requires pyridoxal 5'-phosphate as cofactor.

Its subcellular location is the cytoplasm. The catalysed reaction is (S)-4-amino-5-oxopentanoate = 5-aminolevulinate. Its pathway is porphyrin-containing compound metabolism; protoporphyrin-IX biosynthesis; 5-aminolevulinate from L-glutamyl-tRNA(Glu): step 2/2. In Clostridium kluyveri (strain ATCC 8527 / DSM 555 / NBRC 12016 / NCIMB 10680 / K1), this protein is Glutamate-1-semialdehyde 2,1-aminomutase.